Consider the following 148-residue polypeptide: NTR domain-containing protein (148 aa).

Positions 1–26 are cleaved as a signal peptide; it reads MVCRFSYVQVVLILVVLSVIISWANA. 3 cysteine pairs are disulfide-bonded: Cys-27-Cys-96, Cys-29-Cys-122, and Cys-40-Cys-146. The NTR domain occupies 27–146; the sequence is CSCFPPDETR…LQLFNDPQWC (120 aa).

As to expression, prismatic layer of shell (at protein level). Expressed primarily in the mantle with highest level in the mantle edge and lower level in the mantle pallium.

It is found in the secreted. The sequence is that of NTR domain-containing protein from Margaritifera margaritifera (Freshwater pearl mussel).